The following is a 2153-amino-acid chain: RNA-directed RNA polymerase L (2153 aa).

Residues His-36, Glu-54, Asp-97, Glu-110, and Val-111 each coordinate Mn(2+). Residue Lys-124 is the For endonuclease activity of the active site. A RdRp catalytic domain is found at 957-1143; the sequence is TGNVIKFKRR…AVNQEMWKSM (187 aa). Residue Asp-1100 coordinates Mg(2+). Residues 1291-2153 form an interaction with the viral nucleoprotein region; the sequence is KQAFYSYKHT…FPHDPVSSFY (863 aa).

Belongs to the Bunyavirales RNA polymerase family. In terms of assembly, interacts with the viral nucleoprotein; this interaction is required for RdRp function. It depends on Mn(2+) as a cofactor. Requires Mg(2+) as cofactor.

The protein resides in the host cytoplasm. Its subcellular location is the host perinuclear region. It catalyses the reaction RNA(n) + a ribonucleoside 5'-triphosphate = RNA(n+1) + diphosphate. Functionally, RNA-dependent RNA polymerase, which is responsible for the replication and transcription of the viral RNA genome using antigenomic RNA as an intermediate. During transcription, synthesizes subgenomic RNAs and assures their capping by a cap-snatching mechanism, which involves the endonuclease activity cleaving the host capped pre-mRNAs. These short capped RNAs are then used as primers for viral transcription. Cleaves ssRNA substrates but not DNA. Seems to downregulate the expression of its own and heterologous mRNAs through its endonuclease activity. The chain is RNA-directed RNA polymerase L from Sin Nombre orthohantavirus (SNV).